We begin with the raw amino-acid sequence, 418 residues long: MAGIKIIKENVDRETFEALAEICPFDAFSYENDKLEVTAACKMCKMCLKKGPEGVLILEEDEKVAIDKSLYRGITVYVDHIEGQIHPVTFELIGKARELAAVIGHPVYALLMGTNITEKADELLKYGVDKVFVYDKPELKHFVIEPYANVLEDFIEKVKPSSILVGATNVGRSLAPRVAARYRTGLTADCTILEMKENTDLVQIRPAFGGNIMAQIVTENTRPQFCTVRYKVFTAPERVNEPWGDVEMMDIEKAKLVSAIEVMEVIKKEKGIDLSEAETIVAVGRGVKCEKDLDMIHEFAEKIGATVACTRPGIEAGWFDARLQIGLSGRTVKPKLIIALGISGAVQFAAGMQNSEYIIAINSDPKAPIFNIAHCGMVGDLYEILPELLTMIEGPENNKDTETISIPEAIETPERMVV.

FAD-binding positions include R285, 325–328 (IGLS), 343–348 (SGAVQF), N362, and 380–381 (DL).

The protein belongs to the ETF alpha-subunit/FixB family. In terms of assembly, part of the stable heterotrimeric lactate dehydrogenase-Etf complex, which is formed by the lactate dehydrogenase LctD and the electron-transferring flavoprotein (Etf) alpha (LctC) and beta (LctB) subunits. It depends on FAD as a cofactor. The cofactor is [4Fe-4S] cluster.

It is found in the cytoplasm. The enzyme catalyses lactate + 2 reduced [2Fe-2S]-[ferredoxin] + 2 NAD(+) = 2 oxidized [2Fe-2S]-[ferredoxin] + pyruvate + 2 NADH. Activity is stimulated by divalent cations. Highest stimulation is observed with Ca(2+). In terms of biological role, the lactate dehydrogenase-Etf complex catalyzes the oxidation of lactate to pyruvate. It uses flavin-based electron confurcation to drive endergonic lactate oxidation with NAD(+) as oxidant at the expense of simultaneous exergonic electron flow from reduced ferredoxin to NAD(+). The electron transfer flavoprotein (Etf) mediates the electron transfer between the different donors and acceptors. The polypeptide is Lactate dehydrogenase (NAD(+),ferredoxin) subunit LctC (Acetobacterium woodii (strain ATCC 29683 / DSM 1030 / JCM 2381 / KCTC 1655 / WB1)).